We begin with the raw amino-acid sequence, 2555 residues long: Ubiquitin carboxyl-terminal hydrolase 9Y (2555 aa).

Positions Met-1–Pro-66 are disordered. Residues Asn-13–Ala-45 show a composition bias toward polar residues. A Phosphoserine modification is found at Ser-589. A Phosphothreonine modification is found at Thr-591. A disordered region spans residues Asn-972–Asp-997. A compositionally biased stretch (low complexity) spans Pro-974–Ser-984. The USP domain maps to Val-1559–Met-1958. Cys-1568 (nucleophile) is an active-site residue. Positions 1729, 1731, 1773, and 1776 each coordinate Zn(2+). The active-site Proton acceptor is His-1881. Ser-2444 bears the Phosphoserine mark. A compositionally biased stretch (acidic residues) spans Pro-2476–Ala-2485. A disordered region spans residues Pro-2476–Gln-2555. Polar residues-rich tracts occupy residues Pro-2504 to Val-2514 and Asn-2528 to Gln-2555. Phosphotyrosine is present on Tyr-2541. The residue at position 2548 (Ser-2548) is a Phosphoserine.

This sequence belongs to the peptidase C19 family. In terms of tissue distribution, widely expressed in embryonic and adult tissues.

The enzyme catalyses Thiol-dependent hydrolysis of ester, thioester, amide, peptide and isopeptide bonds formed by the C-terminal Gly of ubiquitin (a 76-residue protein attached to proteins as an intracellular targeting signal).. It functions in the pathway protein modification; protein ubiquitination. In terms of biological role, deubiquitinase that mediates deubiquitination of target proteins. May stabilize target proteins that are important for male germ cell development. This Homo sapiens (Human) protein is Ubiquitin carboxyl-terminal hydrolase 9Y.